We begin with the raw amino-acid sequence, 188 residues long: Elongation factor P-like protein (188 aa).

The protein belongs to the elongation factor P family.

This chain is Elongation factor P-like protein, found in Vibrio vulnificus (strain CMCP6).